A 213-amino-acid polypeptide reads, in one-letter code: Protein ORF D (213 aa).

In Elephas maximus (Indian elephant), this protein is Protein ORF D.